The chain runs to 168 residues: S-ribosylhomocysteine lyase (168 aa).

Fe cation contacts are provided by histidine 54, histidine 58, and cysteine 128.

The protein belongs to the LuxS family. In terms of assembly, homodimer. It depends on Fe cation as a cofactor.

It carries out the reaction S-(5-deoxy-D-ribos-5-yl)-L-homocysteine = (S)-4,5-dihydroxypentane-2,3-dione + L-homocysteine. Its function is as follows. Involved in the synthesis of autoinducer 2 (AI-2) which is secreted by bacteria and is used to communicate both the cell density and the metabolic potential of the environment. The regulation of gene expression in response to changes in cell density is called quorum sensing. Catalyzes the transformation of S-ribosylhomocysteine (RHC) to homocysteine (HC) and 4,5-dihydroxy-2,3-pentadione (DPD). The polypeptide is S-ribosylhomocysteine lyase (Neisseria meningitidis serogroup A / serotype 4A (strain DSM 15465 / Z2491)).